The following is a 299-amino-acid chain: Homoserine kinase (299 aa).

ATP is bound at residue 85 to 95 (PMSRGLGSSAT).

Belongs to the GHMP kinase family. Homoserine kinase subfamily.

The protein resides in the cytoplasm. It catalyses the reaction L-homoserine + ATP = O-phospho-L-homoserine + ADP + H(+). The protein operates within amino-acid biosynthesis; L-threonine biosynthesis; L-threonine from L-aspartate: step 4/5. In terms of biological role, catalyzes the ATP-dependent phosphorylation of L-homoserine to L-homoserine phosphate. The sequence is that of Homoserine kinase from Clostridium novyi (strain NT).